The primary structure comprises 559 residues: Membrane protein insertase YidC (559 aa).

Residues 6-26 traverse the membrane as a helical segment; it reads TVLWMIFSFSLLLLWNNWQIH. The segment at 34–80 is disordered; that stretch reads GGPSPEQNAPATANNQAATNPASNTPAVPNAPAATSAPSSVPGSTAP. Residues 42–80 are compositionally biased toward low complexity; it reads APATANNQAATNPASNTPAVPNAPAATSAPSSVPGSTAP. Helical transmembrane passes span 367–387, 441–461, 480–500, and 510–530; these read LLGN…AVFY, LPMV…LASV, PYFI…KLNP, and VMMV…AGLV.

The protein belongs to the OXA1/ALB3/YidC family. Type 1 subfamily. In terms of assembly, interacts with the Sec translocase complex via SecD. Specifically interacts with transmembrane segments of nascent integral membrane proteins during membrane integration.

Its subcellular location is the cell inner membrane. Its function is as follows. Required for the insertion and/or proper folding and/or complex formation of integral membrane proteins into the membrane. Involved in integration of membrane proteins that insert both dependently and independently of the Sec translocase complex, as well as at least some lipoproteins. Aids folding of multispanning membrane proteins. This Bordetella avium (strain 197N) protein is Membrane protein insertase YidC.